Consider the following 664-residue polypeptide: UvrABC system protein B (664 aa).

Residues 25–412 (KGLVSGLTDQ…LQVVEQLVRP (388 aa)) enclose the Helicase ATP-binding domain. ATP is bound at residue 38–45 (GVTGSGKT). Positions 91-114 (YYDYYQPEAYVPQKDMYIEKDSDI) match the Beta-hairpin motif. Residues 428-594 (QIDDLLEEVK…GIRKAIKDIN (167 aa)) form the Helicase C-terminal domain. The UVR domain maps to 620–655 (ARLIKELESQMKKAAKNLEFERAALIRDRVVELRAA).

Belongs to the UvrB family. In terms of assembly, forms a heterotetramer with UvrA during the search for lesions. Interacts with UvrC in an incision complex.

The protein localises to the cytoplasm. In terms of biological role, the UvrABC repair system catalyzes the recognition and processing of DNA lesions. A damage recognition complex composed of 2 UvrA and 2 UvrB subunits scans DNA for abnormalities. Upon binding of the UvrA(2)B(2) complex to a putative damaged site, the DNA wraps around one UvrB monomer. DNA wrap is dependent on ATP binding by UvrB and probably causes local melting of the DNA helix, facilitating insertion of UvrB beta-hairpin between the DNA strands. Then UvrB probes one DNA strand for the presence of a lesion. If a lesion is found the UvrA subunits dissociate and the UvrB-DNA preincision complex is formed. This complex is subsequently bound by UvrC and the second UvrB is released. If no lesion is found, the DNA wraps around the other UvrB subunit that will check the other stand for damage. In Dehalococcoides mccartyi (strain CBDB1), this protein is UvrABC system protein B.